The chain runs to 254 residues: Ribonuclease HII (254 aa).

An RNase H type-2 domain is found at 70–254 (TCIAGIDEAG…SFAPVKSVIS (185 aa)). Residues aspartate 76, glutamate 77, and aspartate 168 each contribute to the a divalent metal cation site.

The protein belongs to the RNase HII family. Mn(2+) is required as a cofactor. It depends on Mg(2+) as a cofactor.

Its subcellular location is the cytoplasm. It catalyses the reaction Endonucleolytic cleavage to 5'-phosphomonoester.. Its function is as follows. Endonuclease that specifically degrades the RNA of RNA-DNA hybrids. This Bacillus pumilus (strain SAFR-032) protein is Ribonuclease HII.